Consider the following 41-residue polypeptide: Trypsin inhibitor 2c (41 aa).

Intrachain disulfides connect cysteine 11/cysteine 32 and cysteine 15/cysteine 28.

In terms of biological role, inhibits bovine trypsin with a Ki of 0.174 nM and trypsin-like proteases from G.mellonella larvae. Has no activity against serine proteases chymotrypsin, subtilisin and elastase. Has no activity against cysteine proteases from beetle gut. This Fagopyrum esculentum (Common buckwheat) protein is Trypsin inhibitor 2c.